Consider the following 1026-residue polypeptide: Retinoblastoma-related protein 1 (1026 aa).

Residues 416-616 are domain A; sequence TPVSTAMTTA…EKGSSMYNSL (201 aa). A pocket region spans residues 416-872; it reads TPVSTAMTTA…NEVFIPSVKP (457 aa). The spacer stretch occupies residues 617-737; sequence AVARPALSVE…PGGGGETCAE (121 aa). Residues 656–680 are disordered; sequence PVPSLPKPEPMSAQNGDPRSPKRPC. Positions 738–872 are domain B; sequence TGISVFFSKI…NEVFIPSVKP (135 aa). Positions 1007 to 1026 are disordered; the sequence is QNGSSASSSGAPLKSEQPDS.

Belongs to the retinoblastoma protein (RB) family.

The protein resides in the nucleus. Regulator of biological processes that recruits a histone deacetylase to control gene transcription. May play a role in the entry into mitosis, negatively regulating the cell proliferation. Formation of stable complexes with geminiviridae replication-associated proteins may create a cellular environment which favors viral DNA replication. The chain is Retinoblastoma-related protein 1 (RBR1) from Pisum sativum (Garden pea).